The chain runs to 158 residues: Ribosome maturation factor RimP (158 aa).

This sequence belongs to the RimP family.

The protein localises to the cytoplasm. In terms of biological role, required for maturation of 30S ribosomal subunits. In Leuconostoc citreum (strain KM20), this protein is Ribosome maturation factor RimP.